We begin with the raw amino-acid sequence, 336 residues long: Adenosine deaminase (336 aa).

Residues His15 and His17 each contribute to the Zn(2+) site. His17, Asp19, and Gly172 together coordinate substrate. His199 contacts Zn(2+). Glu202 serves as the catalytic Proton donor. Asp279 serves as a coordination point for Zn(2+).

This sequence belongs to the metallo-dependent hydrolases superfamily. Adenosine and AMP deaminases family. Adenosine deaminase subfamily. It depends on Zn(2+) as a cofactor.

The catalysed reaction is adenosine + H2O + H(+) = inosine + NH4(+). It catalyses the reaction 2'-deoxyadenosine + H2O + H(+) = 2'-deoxyinosine + NH4(+). In terms of biological role, catalyzes the hydrolytic deamination of adenosine and 2-deoxyadenosine. The polypeptide is Adenosine deaminase (Streptococcus thermophilus (strain ATCC BAA-250 / LMG 18311)).